The sequence spans 209 residues: Urease accessory protein UreG (209 aa).

Position 11 to 18 (11 to 18 (GPVGSGKT)) interacts with GTP.

This sequence belongs to the SIMIBI class G3E GTPase family. UreG subfamily. As to quaternary structure, homodimer. UreD, UreF and UreG form a complex that acts as a GTP-hydrolysis-dependent molecular chaperone, activating the urease apoprotein by helping to assemble the nickel containing metallocenter of UreC. The UreE protein probably delivers the nickel.

The protein localises to the cytoplasm. Functionally, facilitates the functional incorporation of the urease nickel metallocenter. This process requires GTP hydrolysis, probably effectuated by UreG. The polypeptide is Urease accessory protein UreG (Edwardsiella ictaluri (strain 93-146)).